The sequence spans 218 residues: Small ribosomal subunit protein uS3 (218 aa).

The KH type-2 domain occupies 38–106; it reads VREYINKRLQ…RVHINIVEIK (69 aa).

The protein belongs to the universal ribosomal protein uS3 family. In terms of assembly, part of the 30S ribosomal subunit. Forms a tight complex with proteins S10 and S14.

Functionally, binds the lower part of the 30S subunit head. Binds mRNA in the 70S ribosome, positioning it for translation. The sequence is that of Small ribosomal subunit protein uS3 from Geobacillus thermodenitrificans (strain NG80-2).